The primary structure comprises 258 residues: Probable phthiotriol/phenolphthiotriol dimycocerosates methyltransferase 2 (258 aa).

The protein belongs to the methyltransferase superfamily. Phthiotriol/phenolphthiotriol dimycocerosates methyltransferase family.

Its function is as follows. Catalyzes the methylation of the lipid moiety of the intermediate compounds phthiotriol and glycosylated phenolphthiotriol dimycoserosates to form phthiocerol dimycocerosates (DIM A) and glycosylated phenolphthiocerol dimycocerosates (PGL). This Mycobacterium ulcerans (strain Agy99) protein is Probable phthiotriol/phenolphthiotriol dimycocerosates methyltransferase 2.